The sequence spans 232 residues: Phosphate import ATP-binding protein PstB (232 aa).

In terms of domain architecture, ABC transporter spans 1–227 (MFNINMEIKE…PKDRRTENYI (227 aa)). Residue 18-25 (GPSGCGKT) participates in ATP binding.

This sequence belongs to the ABC transporter superfamily. Phosphate importer (TC 3.A.1.7) family. In terms of assembly, the complex is composed of two ATP-binding proteins (PstB), two transmembrane proteins (PstC and PstA) and a solute-binding protein (PstS).

It is found in the cell membrane. It carries out the reaction phosphate(out) + ATP + H2O = ADP + 2 phosphate(in) + H(+). In terms of biological role, part of the ABC transporter complex PstSACB involved in phosphate import. Responsible for energy coupling to the transport system. The polypeptide is Phosphate import ATP-binding protein PstB (Mycoplasma mycoides subsp. mycoides SC (strain CCUG 32753 / NCTC 10114 / PG1)).